The primary structure comprises 325 residues: Beta-ketoacyl-[acyl-carrier-protein] synthase III (325 aa).

Active-site residues include C119 and H252. The tract at residues 253–257 (QANLR) is ACP-binding. The active site involves N282.

This sequence belongs to the thiolase-like superfamily. FabH family. In terms of assembly, homodimer.

The protein resides in the cytoplasm. It catalyses the reaction malonyl-[ACP] + acetyl-CoA + H(+) = 3-oxobutanoyl-[ACP] + CO2 + CoA. It participates in lipid metabolism; fatty acid biosynthesis. In terms of biological role, catalyzes the condensation reaction of fatty acid synthesis by the addition to an acyl acceptor of two carbons from malonyl-ACP. Catalyzes the first condensation reaction which initiates fatty acid synthesis and may therefore play a role in governing the total rate of fatty acid production. Possesses both acetoacetyl-ACP synthase and acetyl transacylase activities. Its substrate specificity determines the biosynthesis of branched-chain and/or straight-chain of fatty acids. This Polaromonas naphthalenivorans (strain CJ2) protein is Beta-ketoacyl-[acyl-carrier-protein] synthase III.